A 461-amino-acid chain; its full sequence is Cysteine--tRNA ligase (461 aa).

Position 28 (cysteine 28) interacts with Zn(2+). A 'HIGH' region motif is present at residues 30–40 (ITVYDLCHIGH). Residues cysteine 209, histidine 234, and glutamate 238 each contribute to the Zn(2+) site. The 'KMSKS' region signature appears at 266–270 (KMSKS). Position 269 (lysine 269) interacts with ATP.

This sequence belongs to the class-I aminoacyl-tRNA synthetase family. Monomer. Zn(2+) serves as cofactor.

It is found in the cytoplasm. It catalyses the reaction tRNA(Cys) + L-cysteine + ATP = L-cysteinyl-tRNA(Cys) + AMP + diphosphate. The protein is Cysteine--tRNA ligase of Escherichia coli (strain 55989 / EAEC).